Consider the following 67-residue polypeptide: uncharacterized protein (67 aa).

Residues 19-39 (ISFIIFFFFYFFFFYFFYGFW) traverse the membrane as a helical segment.

The protein localises to the membrane. This is an uncharacterized protein from Dictyostelium discoideum (Social amoeba).